The following is a 100-amino-acid chain: Testis development-related protein 1 (100 aa).

Residues 73–100 (GLGSLGGQDSSGSLVQRASCELESPYEL) form a disordered region.

As to expression, expressed in the testis but not in any other non-reproductive tissues (at protein level). Mainly located in spermatogenic cells in seminiferous tubules of adult testis.

It localises to the cytoplasm. The polypeptide is Testis development-related protein 1 (TDRG1) (Homo sapiens (Human)).